Reading from the N-terminus, the 515-residue chain is MATITFDSLNPVTVAISAGFLLLLIIFVKSRTGSSKRKPPGPPGWPIFGNMFDLGDLPHQTLYKLKSKYGPIVWLQLGSINTMVVQNAVSAAELFKKHDVPFCDRKVPDTLTAFNFNQGSLGMNTYGGHWRVLRRLCSMEFLVNKRMNETTDLRRRIEDNMVRWIEEDSLASKAQGGTGAVQLSRFLFLMAFNLVGNLMLSRDLMDNKDPEGREFFDCMNEILELAGTPNIADFLPLLKKLDPLGMKKRMVDNMSRTMKISSKFVQERLDNRKAGKINEKKDFLDVMLEYQGDGKDGPDKFTEQHVNIVIMEMFFAGSETTSISIEWGFTELLRNPHAFKKVREEIDRVVGVNRMVEETDMENLPYLQAVVKETLRLHPALPMLLPRNTMEDTEYMGYLIPKGTQVFVNAWAIGRDPEYWQDPLSFKPERFINSSVEYKGQHFELIPFGSGRRICVGFPLAHRVVHLTLATLVQAFDWDLGAGVKPQDIDLEERLGLTLRKKNPLNVIPKKRVHI.

2 helical membrane-spanning segments follow: residues S8–V28 and A180–L200. C455 serves as a coordination point for heme.

It belongs to the cytochrome P450 family. In terms of tissue distribution, expressed in the leaf internal phloem-associated parenchyma (IPAP) inside the mesophyll.

It is found in the endoplasmic reticulum membrane. It carries out the reaction (+)-cis-trans-nepetalactol + 3 reduced [NADPH--hemoprotein reductase] + 3 O2 = 7-deoxyloganetate + 3 oxidized [NADPH--hemoprotein reductase] + 4 H2O + 4 H(+). The protein operates within alkaloid biosynthesis. Component of the seco-iridoid and derivatives monoterpenoid indole alkaloids (MIAs, e.g. vincristine, quinine, and strychnine) biosynthesis pathway. Catalyzes the conversion of cis-trans-nepetalactol (iridodial) into 7-deoxyloganetic acid. Also converts iridotrial into 7-deoxyloganetic acid. The protein is Iridoid oxidase of Catharanthus roseus (Madagascar periwinkle).